A 77-amino-acid chain; its full sequence is Cysteine-rich protein 1 (77 aa).

The LIM zinc-binding domain occupies 2 to 63 (PKCPKCDKEV…HPCYSAMFGP (62 aa)). Residues lysine 9 and lysine 22 each carry the N6-acetyllysine modification. Omega-N-methylarginine is present on arginine 68.

Functionally, seems to have a role in zinc absorption and may function as an intracellular zinc transport protein. The chain is Cysteine-rich protein 1 (Crip1) from Mus musculus (Mouse).